Reading from the N-terminus, the 426-residue chain is Serine--tRNA ligase (426 aa).

228–230 (TSE) contacts L-serine. Residues 259–261 (RRE) and Val275 each bind ATP. Glu282 contacts L-serine. Residue 346–349 (ELTS) coordinates ATP. Thr386 provides a ligand contact to L-serine.

The protein belongs to the class-II aminoacyl-tRNA synthetase family. Type-1 seryl-tRNA synthetase subfamily. In terms of assembly, homodimer. The tRNA molecule binds across the dimer.

It localises to the cytoplasm. It catalyses the reaction tRNA(Ser) + L-serine + ATP = L-seryl-tRNA(Ser) + AMP + diphosphate + H(+). It carries out the reaction tRNA(Sec) + L-serine + ATP = L-seryl-tRNA(Sec) + AMP + diphosphate + H(+). It participates in aminoacyl-tRNA biosynthesis; selenocysteinyl-tRNA(Sec) biosynthesis; L-seryl-tRNA(Sec) from L-serine and tRNA(Sec): step 1/1. Functionally, catalyzes the attachment of serine to tRNA(Ser). Is also able to aminoacylate tRNA(Sec) with serine, to form the misacylated tRNA L-seryl-tRNA(Sec), which will be further converted into selenocysteinyl-tRNA(Sec). The polypeptide is Serine--tRNA ligase (Arthrobacter sp. (strain FB24)).